The chain runs to 304 residues: MQKFDIKTFQGLILSLQDYWARQGCVISQPLDMEVGAGTSHPMTFLRSIGPEPMNCAYVQPSRRPTDGRYGENPNRLQHYYQFQVILKPSPDNIQELYLGSLRELGFDPLVHDIRFVEDNWENPTLGAWGLGWEVWLNGMEVTQFTYFQQVGGLECFPVTGEITYGLERLAMYIQGVDSLYDLVWADGPLGKVTYRDVFHQNEVEQSTYNFEHADVPFLFQLFDQCEKECQHLLNLELPLPLPAYERILKAAHAFNLLDARHAISVTERQRYILRIRTLSKAVAEAYYAARERLGFPMCKATQA.

Belongs to the class-II aminoacyl-tRNA synthetase family. In terms of assembly, tetramer of two alpha and two beta subunits.

It is found in the cytoplasm. The enzyme catalyses tRNA(Gly) + glycine + ATP = glycyl-tRNA(Gly) + AMP + diphosphate. The sequence is that of Glycine--tRNA ligase alpha subunit from Tolumonas auensis (strain DSM 9187 / NBRC 110442 / TA 4).